Reading from the N-terminus, the 354-residue chain is MNALKNDRYLRALLRQSVDVTPVWMMRQAGRYLPEYQATRAKAGDFIALCKNTELACEVTLQPLQRYPLDAAILFSDILTIPDAMGLGLYFEAGEGPRFKSPVFSRADVEKLPVPDPEMELSYVTDAVRAIRKALAGQVPLIGFSGSPWTLATYMVEGGSSKAFTKIKKMMYAEPTVMHLLLDKLADSVILYLNAQIKAGAQSVMVFDTWGGVLTGRDYREFSLHYMHKIVDGLIRENEGRRVPVTLFAKGGGQWLEAMAETGCDALGLDWTTDIADARRRVGNKVALQGNMDPSMLYASPERIEQEVSTILQGFGTGSGHVFNLGHGIHQDILPEHAGVFVEAVHKLSAKYHQ.

Residues 27–31 (RQAGR), Phe46, Asp77, Tyr154, Thr209, and His327 each bind substrate.

The protein belongs to the uroporphyrinogen decarboxylase family. In terms of assembly, homodimer.

It localises to the cytoplasm. It catalyses the reaction uroporphyrinogen III + 4 H(+) = coproporphyrinogen III + 4 CO2. Its pathway is porphyrin-containing compound metabolism; protoporphyrin-IX biosynthesis; coproporphyrinogen-III from 5-aminolevulinate: step 4/4. Catalyzes the decarboxylation of four acetate groups of uroporphyrinogen-III to yield coproporphyrinogen-III. The chain is Uroporphyrinogen decarboxylase from Photorhabdus laumondii subsp. laumondii (strain DSM 15139 / CIP 105565 / TT01) (Photorhabdus luminescens subsp. laumondii).